The chain runs to 87 residues: Probable Fe(2+)-trafficking protein (87 aa).

Belongs to the Fe(2+)-trafficking protein family.

In terms of biological role, could be a mediator in iron transactions between iron acquisition and iron-requiring processes, such as synthesis and/or repair of Fe-S clusters in biosynthetic enzymes. In Francisella tularensis subsp. novicida (strain U112), this protein is Probable Fe(2+)-trafficking protein.